A 426-amino-acid chain; its full sequence is Pannexin-1 (426 aa).

Residues 1–40 (MAIAHLATEYVFSDFLLKEPTEPKFKGLRLELAVDKMVTC) are Cytoplasmic-facing. At cysteine 40 the chain carries S-nitrosocysteine. A helical transmembrane segment spans residues 41-61 (IAVGLPLLLISLAFAQEISIG). Over 62-106 (TQISCFSPSSFSWRQAAFVDSYCWAAVQQKNSLQSESGNLPLWLH) the chain is Extracellular. 2 disulfides stabilise this stretch: cysteine 66–cysteine 264 and cysteine 84–cysteine 245. The chain crosses the membrane as a helical span at residues 107-127 (KFFPYILLLFAILLYLPALFW). Over 128–216 (RFAAAPHLCS…HLIMKYISCR (89 aa)) the chain is Cytoplasmic. Tyrosine 198 is subject to Phosphotyrosine. The chain crosses the membrane as a helical span at residues 217–237 (LVTFAVVLLACIYLSYYFSLS). Topologically, residues 238-277 (SLSDEFLCSIKSGVLRNDSTIPDSFQCKLIAVGIFQLLSL) are extracellular. Asparagine 254 is a glycosylation site (N-linked (GlcNAc...) asparagine). The helical transmembrane segment at 278–298 (INLLVYALLVPVVIYTLFVPF) threads the bilayer. The Cytoplasmic portion of the chain corresponds to 299–426 (RQKTDVLKVY…SRQRLLNSSC (128 aa)). S-nitrosocysteine is present on cysteine 346. The segment at 407–426 (ETAANNGEKNSRQRLLNSSC) is disordered.

Belongs to the pannexin family. As to quaternary structure, homoheptameric. In terms of processing, S-nitrosylation inhibits channel currents and ATP release. Post-translationally, N-glycosylation plays a role in cell surface targeting. Glycosylation at its extracellular surface makes unlikely that two oligomers could dock to form an intercellular channel such as in gap junctions. Exists in three glycosylation states: non-glycosylated (GLY0), high-mannose glycosylated (GLY1), and fully mature glycosylated (GLY2). Cleaved by CASP3 and CASP7 during apoptosis. Cleavage opens the channel for the release of metabolites and induces plasma membrane permeability during apoptosis. In terms of processing, phosphorylated at Tyr-198 by SRC. Phosphorylation activates ATP release. Constitutively phosphorylated in vascular smooth muscle cells. Expressed in the eye, thyroid, prostate, kidney and liver. Abundantly expressed in the CNS, including hippocampus, olfactory bulb, cortex, cerebellum and white matter.

It is found in the cell membrane. The protein resides in the endoplasmic reticulum membrane. The catalysed reaction is Ca(2+)(in) = Ca(2+)(out). It catalyses the reaction ATP(in) = ATP(out). It carries out the reaction K(+)(in) = K(+)(out). The enzyme catalyses chloride(in) = chloride(out). The catalysed reaction is iodide(out) = iodide(in). It catalyses the reaction Na(+)(in) = Na(+)(out). It carries out the reaction nitrate(in) = nitrate(out). The enzyme catalyses L-aspartate(out) = L-aspartate(in). The catalysed reaction is L-glutamate(out) = L-glutamate(in). It catalyses the reaction D-gluconate(in) = D-gluconate(out). It carries out the reaction spermidine(in) = spermidine(out). Its function is as follows. Ion channel involved in a variety of physiological functions such as blood pressure regulation, apoptotic cell clearance and oogenesis. Forms anion-selective channels with relatively low conductance and an order of permeabilities: nitrate&gt;iodide&gt;chlroride&gt;&gt;aspartate=glutamate=gluconate. Can release ATP upon activation through phosphorylation or cleavage at C-terminus. May play a role as a Ca(2+)-leak channel to regulate ER Ca(2+) homeostasis. During apoptosis, the C terminal tail is cleaved by caspases, which opens the main pore acting as a large-pore ATP efflux channel with a broad distribution, which allows the regulated release of molecules and ions smaller than 1 kDa, such as nucleotides ATP and UTP, and selective plasma membrane permeability to attract phagocytes that engulf the dying cells. This Rattus norvegicus (Rat) protein is Pannexin-1 (Panx1).